Consider the following 500-residue polypeptide: Aspartyl/glutamyl-tRNA(Asn/Gln) amidotransferase subunit B (500 aa).

This sequence belongs to the GatB/GatE family. GatB subfamily. In terms of assembly, heterotrimer of A, B and C subunits.

The enzyme catalyses L-glutamyl-tRNA(Gln) + L-glutamine + ATP + H2O = L-glutaminyl-tRNA(Gln) + L-glutamate + ADP + phosphate + H(+). The catalysed reaction is L-aspartyl-tRNA(Asn) + L-glutamine + ATP + H2O = L-asparaginyl-tRNA(Asn) + L-glutamate + ADP + phosphate + 2 H(+). Its function is as follows. Allows the formation of correctly charged Asn-tRNA(Asn) or Gln-tRNA(Gln) through the transamidation of misacylated Asp-tRNA(Asn) or Glu-tRNA(Gln) in organisms which lack either or both of asparaginyl-tRNA or glutaminyl-tRNA synthetases. The reaction takes place in the presence of glutamine and ATP through an activated phospho-Asp-tRNA(Asn) or phospho-Glu-tRNA(Gln). In Clavibacter michiganensis subsp. michiganensis (strain NCPPB 382), this protein is Aspartyl/glutamyl-tRNA(Asn/Gln) amidotransferase subunit B.